The following is a 106-amino-acid chain: MDQFQHIDVQGAQALLEQSEAKLVDIRDPQSFAVAHAESAFHLTNDSIVSFMNDVEFEQPILVMCYHGISSQGAAQYLVNQGFEQVYSVDGGFEAWQRAELPIVRS.

Residues Glu17–Arg105 enclose the Rhodanese domain. Cys65 serves as the catalytic Cysteine persulfide intermediate.

Belongs to the GlpE family.

The protein resides in the cytoplasm. The catalysed reaction is thiosulfate + hydrogen cyanide = thiocyanate + sulfite + 2 H(+). The enzyme catalyses thiosulfate + [thioredoxin]-dithiol = [thioredoxin]-disulfide + hydrogen sulfide + sulfite + 2 H(+). Functionally, transferase that catalyzes the transfer of sulfur from thiosulfate to thiophilic acceptors such as cyanide or dithiols. May function in a CysM-independent thiosulfate assimilation pathway by catalyzing the conversion of thiosulfate to sulfite, which can then be used for L-cysteine biosynthesis. The protein is Thiosulfate sulfurtransferase GlpE of Vibrio campbellii (strain ATCC BAA-1116).